The sequence spans 231 residues: 5'-methylthioadenosine/S-adenosylhomocysteine nucleosidase (231 aa).

Glutamate 12 functions as the Proton acceptor in the catalytic mechanism. Substrate-binding positions include glycine 78, methionine 153, and 174 to 175 (ME). Catalysis depends on aspartate 198, which acts as the Proton donor.

This sequence belongs to the PNP/UDP phosphorylase family. MtnN subfamily.

The enzyme catalyses S-adenosyl-L-homocysteine + H2O = S-(5-deoxy-D-ribos-5-yl)-L-homocysteine + adenine. The catalysed reaction is S-methyl-5'-thioadenosine + H2O = 5-(methylsulfanyl)-D-ribose + adenine. It catalyses the reaction 5'-deoxyadenosine + H2O = 5-deoxy-D-ribose + adenine. It participates in amino-acid biosynthesis; L-methionine biosynthesis via salvage pathway; S-methyl-5-thio-alpha-D-ribose 1-phosphate from S-methyl-5'-thioadenosine (hydrolase route): step 1/2. In terms of biological role, catalyzes the irreversible cleavage of the glycosidic bond in both 5'-methylthioadenosine (MTA) and S-adenosylhomocysteine (SAH/AdoHcy) to adenine and the corresponding thioribose, 5'-methylthioribose and S-ribosylhomocysteine, respectively. Also cleaves 5'-deoxyadenosine, a toxic by-product of radical S-adenosylmethionine (SAM) enzymes, into 5-deoxyribose and adenine. The polypeptide is 5'-methylthioadenosine/S-adenosylhomocysteine nucleosidase (Bacillus anthracis (strain A0248)).